The chain runs to 351 residues: Tetraacyldisaccharide 4'-kinase (351 aa).

Residue 61–68 coordinates ATP; that stretch reads TAGGTGKT.

The protein belongs to the LpxK family.

It catalyses the reaction a lipid A disaccharide + ATP = a lipid IVA + ADP + H(+). The protein operates within glycolipid biosynthesis; lipid IV(A) biosynthesis; lipid IV(A) from (3R)-3-hydroxytetradecanoyl-[acyl-carrier-protein] and UDP-N-acetyl-alpha-D-glucosamine: step 6/6. Functionally, transfers the gamma-phosphate of ATP to the 4'-position of a tetraacyldisaccharide 1-phosphate intermediate (termed DS-1-P) to form tetraacyldisaccharide 1,4'-bis-phosphate (lipid IVA). The protein is Tetraacyldisaccharide 4'-kinase of Xanthomonas campestris pv. campestris (strain 8004).